A 949-amino-acid polypeptide reads, in one-letter code: Translation initiation factor IF-2 (949 aa).

3 disordered regions span residues 46–82 (LTASRPAESGPEEVRVTTNIVRRRSRPSAAAEPEAEA), 145–176 (EPAVAQEASPAVTAAKPVPATPAAPPQPERAS), and 188–361 (IPIT…KTEL). Low complexity predominate over residues 152 to 162 (ASPAVTAAKPV). Residues 163–172 (PATPAAPPQP) show a composition bias toward pro residues. Residues 263 to 276 (PRDAAAPRPAGARP) show a composition bias toward low complexity. Residues 334 to 344 (SREERQFDPFH) are compositionally biased toward basic and acidic residues. Positions 449–618 (ERPPVVTIMG…LLQADLMDLK (170 aa)) constitute a tr-type G domain. The segment at 458 to 465 (GHVDHGKT) is G1. 458 to 465 (GHVDHGKT) contacts GTP. The interval 483 to 487 (GITQH) is G2. The interval 504–507 (DTPG) is G3. Residues 504 to 508 (DTPGH) and 558 to 561 (NKID) each bind GTP. Residues 558–561 (NKID) are G4. Positions 594-596 (SAK) are G5.

It belongs to the TRAFAC class translation factor GTPase superfamily. Classic translation factor GTPase family. IF-2 subfamily.

The protein localises to the cytoplasm. Its function is as follows. One of the essential components for the initiation of protein synthesis. Protects formylmethionyl-tRNA from spontaneous hydrolysis and promotes its binding to the 30S ribosomal subunits. Also involved in the hydrolysis of GTP during the formation of the 70S ribosomal complex. The polypeptide is Translation initiation factor IF-2 (Trichlorobacter lovleyi (strain ATCC BAA-1151 / DSM 17278 / SZ) (Geobacter lovleyi)).